We begin with the raw amino-acid sequence, 37 residues long: Large ribosomal subunit protein bL36 (37 aa).

The protein belongs to the bacterial ribosomal protein bL36 family.

The polypeptide is Large ribosomal subunit protein bL36 (Endomicrobium trichonymphae).